The chain runs to 310 residues: NADH-cytochrome b5 reductase 1 (310 aa).

The chain crosses the membrane as a helical span at residues 32–52 (EWLPYAVALAAILSGGKVFSN). One can recognise an FAD-binding FR-type domain in the interval 61-166 (TEFQNFELKE…RGPKGAMVYT (106 aa)). Residues 146-161 (AGLR…GPKG) and 172-209 (KIGM…QVDL) contribute to the FAD site.

This sequence belongs to the flavoprotein pyridine nucleotide cytochrome reductase family. As to quaternary structure, monomer. Component of the 2-(3-amino-3-carboxypropyl)histidine synthase complex composed of DPH1, DPH2, DPH3 and a NADH-dependent reductase, predominantly CBR1. The cofactor is FAD.

It localises to the mitochondrion outer membrane. The catalysed reaction is 2 Fe(III)-[cytochrome b5] + NADH = 2 Fe(II)-[cytochrome b5] + NAD(+) + H(+). It catalyses the reaction 2 Fe(3+)-[Dph3] + NADH = 2 Fe(2+)-[Dph3] + NAD(+) + H(+). It functions in the pathway protein modification; peptidyl-diphthamide biosynthesis. In terms of biological role, NADH-dependent reductase for DPH3 and cytochrome b5. Required for the first step of diphthamide biosynthesis, a post-translational modification of histidine which occurs in elongation factor 2. DPH1 and DPH2 transfer a 3-amino-3-carboxypropyl (ACP) group from S-adenosyl-L-methionine (SAM) to a histidine residue, the reaction is assisted by a reduction system comprising DPH3 and a NADH-dependent reductase, predominantly CBR1. By reducing DPH3, also involved in the formation of the tRNA wobble base modification mcm5s 2U (5-methoxycarbonylmethyl-2-thiouridine), mediated by the elongator complex. The cytochrome b5/NADH cytochrome b5 reductase electron transfer system supports the catalytic activity of several sterol biosynthetic enzymes. This chain is NADH-cytochrome b5 reductase 1 (CBR1), found in Ajellomyces capsulatus (strain NAm1 / WU24) (Darling's disease fungus).